The chain runs to 141 residues: Large ribosomal subunit protein uL11 (141 aa).

The protein belongs to the universal ribosomal protein uL11 family. Part of the ribosomal stalk of the 50S ribosomal subunit. Interacts with L10 and the large rRNA to form the base of the stalk. L10 forms an elongated spine to which L12 dimers bind in a sequential fashion forming a multimeric L10(L12)X complex. Post-translationally, one or more lysine residues are methylated.

Functionally, forms part of the ribosomal stalk which helps the ribosome interact with GTP-bound translation factors. The polypeptide is Large ribosomal subunit protein uL11 (Fervidobacterium nodosum (strain ATCC 35602 / DSM 5306 / Rt17-B1)).